Reading from the N-terminus, the 552-residue chain is Cation/acetate symporter ActP (552 aa).

Transmembrane regions (helical) follow at residues 6-26 (LLAV…AIAG), 35-55 (MEAI…TYWA), 78-98 (GLAM…SALV), 103-123 (FDGL…LFLI), 151-171 (LSAC…MVGA), 185-205 (VAVV…GMLA), 208-228 (WVQI…AIMV), 264-284 (ISAL…PHIL), 305-325 (GLMG…ILLV), 357-377 (LFLG…VAGL), 407-427 (VSKI…ILFE), 431-451 (IAFM…PIIL), 467-487 (GGWL…TIWV), and 496-516 (IFPY…GTWL).

This sequence belongs to the sodium:solute symporter (SSF) (TC 2.A.21) family.

The protein localises to the cell inner membrane. In terms of biological role, transports acetate. The polypeptide is Cation/acetate symporter ActP (Erwinia tasmaniensis (strain DSM 17950 / CFBP 7177 / CIP 109463 / NCPPB 4357 / Et1/99)).